A 108-amino-acid chain; its full sequence is Parvalbumin beta (108 aa).

Alanine 1 is subject to N-acetylalanine. A disulfide bridge links cysteine 11 with cysteine 33. EF-hand domains follow at residues 38-73 (KSAD…FKAG) and 77-108 (LTDA…LVKA). Ca(2+)-binding residues include aspartate 51, aspartate 53, serine 55, phenylalanine 57, glutamate 59, glutamate 62, aspartate 90, aspartate 92, aspartate 94, alanine 96, and glutamate 101.

This sequence belongs to the parvalbumin family.

In terms of biological role, in muscle, parvalbumin is thought to be involved in relaxation after contraction. It binds two calcium ions. The protein is Parvalbumin beta of Merlangius merlangus (Whiting).